Here is a 388-residue protein sequence, read N- to C-terminus: GDP-4-keto-6-deoxy-D-mannose 3-dehydratase (388 aa).

GDP-4-dehydro-alpha-D-rhamnose is bound at residue 26 to 29; the sequence is KMFT. Residues 49 to 69 form a helical membrane-spanning segment; it reads YAVMVSSGSTANLLMIAALFF. Residues 56–57, Trp-88, Glu-162, and Ser-183 each bind pyridoxal 5'-phosphate; that span reads GS. Catalysis depends on His-188, which acts as the Proton donor/acceptor. Residue His-215 participates in L-glutamate binding. Residue Arg-219 participates in GDP-4-dehydro-alpha-D-rhamnose binding. Asn-248 contacts pyridoxal 5'-phosphate. L-glutamate is bound at residue Arg-250. Residue Glu-329 participates in GDP-4-dehydro-alpha-D-rhamnose binding.

Belongs to the DegT/DnrJ/EryC1 family. Homodimer. The cofactor is pyridoxal 5'-phosphate.

The protein resides in the cell membrane. The enzyme catalyses GDP-4-dehydro-alpha-D-rhamnose + L-glutamate = GDP-4-dehydro-3,6-dideoxy-alpha-D-mannose + 2-oxoglutarate + NH4(+). It functions in the pathway nucleotide-sugar metabolism; GDP-L-colitose biosynthesis. In terms of biological role, involved in the biosynthesis of L-colitose, a 3,6-dideoxyhexose present in the O-antigen region of lipopolysaccharides (LPS), where it serves as an antigenic determinant and is vital for bacterial defense and survival. Catalyzes the removal of the C3'-hydroxyl group from GDP-4-keto-6-deoxy-D-mannose via a combined transamination-deoxygenation reaction. The catalysis is initiated by a transamination step in which pyridoxal 5'-phosphate (PLP) is converted to pyridoxamine 5'-phosphate (PMP) in the presence of L-glutamate. This coenzyme then forms a Schiff base with GDP-4-keto-6-deoxy-D-mannose and the resulting adduct undergoes a PMP-mediated beta-dehydration reaction to give a sugar enamine intermediate, which after tautomerization and hydrolysis to release ammonia yields GDP-4-keto-3,6-dideoxy-D-mannose as a product. In vitro, is able to catalyze the formation of GDP-4-keto-3,6-dideoxymannose using GDP-perosamine rather than GDP-4-keto-6-deoxymannose as a substrate, with no need of glutamate. This chain is GDP-4-keto-6-deoxy-D-mannose 3-dehydratase, found in Escherichia coli O55:H7 (strain CB9615 / EPEC).